Reading from the N-terminus, the 197-residue chain is Putative manganese efflux pump MntP 1 (197 aa).

Helical transmembrane passes span 8–28 (VILLAIALAMDAFAVSIGLGA), 43–63 (VYAALYFGIAQGVMPLIGYLL), 66–86 (VLLGWLATAAPWLGGGILILL), 123–143 (LAIATSIDAMAAGFTLNLLAL), 146–166 (WLACSIIAIVTAGFGFFGIYL), and 176–196 (DKAEILGGLVLIAIGIKVMFI).

Belongs to the MntP (TC 9.B.29) family.

It localises to the cell inner membrane. Its function is as follows. Probably functions as a manganese efflux pump. This chain is Putative manganese efflux pump MntP 1, found in Psychrobacter cryohalolentis (strain ATCC BAA-1226 / DSM 17306 / VKM B-2378 / K5).